A 210-amino-acid polypeptide reads, in one-letter code: MPDRTAAPSYPFVYLASQSPRRRELLDQLGVRYALLAPTPDEDAEALEAELPGEAPDHYVLRVCVAKAEAARARLVASGKPAAPVLVADTTVTLDGAILGKPADAADALAMLARLAGRTHDVLTALAVIDATGELMPPALSRSAVRFAPATRDALARYVETGEPFGKAGAYAIQGRAAEFVERIDGSHSGIMGLPLFEAAALLRAAHVAF.

Asp-89 acts as the Proton acceptor in catalysis.

Belongs to the Maf family. YhdE subfamily. It depends on a divalent metal cation as a cofactor.

It localises to the cytoplasm. The enzyme catalyses dTTP + H2O = dTMP + diphosphate + H(+). It carries out the reaction UTP + H2O = UMP + diphosphate + H(+). In terms of biological role, nucleoside triphosphate pyrophosphatase that hydrolyzes dTTP and UTP. May have a dual role in cell division arrest and in preventing the incorporation of modified nucleotides into cellular nucleic acids. This is dTTP/UTP pyrophosphatase from Burkholderia thailandensis (strain ATCC 700388 / DSM 13276 / CCUG 48851 / CIP 106301 / E264).